The primary structure comprises 101 residues: Small ribosomal subunit protein uS14 (101 aa).

It belongs to the universal ribosomal protein uS14 family. As to quaternary structure, part of the 30S ribosomal subunit. Contacts proteins S3 and S10.

Functionally, binds 16S rRNA, required for the assembly of 30S particles and may also be responsible for determining the conformation of the 16S rRNA at the A site. The sequence is that of Small ribosomal subunit protein uS14 from Bartonella quintana (strain Toulouse) (Rochalimaea quintana).